A 98-amino-acid chain; its full sequence is NADH-ubiquinone oxidoreductase chain 4L (98 aa).

Helical transmembrane passes span 1–21 (MTPT…GLAF), 26–46 (LLSA…ALSL), and 59–79 (APML…ALLV).

This sequence belongs to the complex I subunit 4L family.

The protein resides in the mitochondrion membrane. The catalysed reaction is a ubiquinone + NADH + 5 H(+)(in) = a ubiquinol + NAD(+) + 4 H(+)(out). Functionally, core subunit of the mitochondrial membrane respiratory chain NADH dehydrogenase (Complex I) which catalyzes electron transfer from NADH through the respiratory chain, using ubiquinone as an electron acceptor. Part of the enzyme membrane arm which is embedded in the lipid bilayer and involved in proton translocation. This Gadus morhua (Atlantic cod) protein is NADH-ubiquinone oxidoreductase chain 4L (MT-ND4L).